Consider the following 345-residue polypeptide: Protein-arginine kinase (345 aa).

One can recognise a Phosphagen kinase C-terminal domain in the interval 15–245 (LVISSRIRLA…LQIINQEIIS (231 aa)). ATP is bound by residues 18–22 (SSRIR), H82, R116, 167–171 (RASVM), and 198–203 (RGLYGE). Positions 328 to 333 (RDFNRA) match the RDXXRA motif of the pArg binding pocket involved in allosteric regulation motif.

Belongs to the ATP:guanido phosphotransferase family.

The catalysed reaction is L-arginyl-[protein] + ATP = N(omega)-phospho-L-arginyl-[protein] + ADP + H(+). Appears to be allosterically activated by the binding of pArg-containing polypeptides to the pArg-binding pocket localized in the C-terminal domain of McsB. Its function is as follows. Catalyzes the specific phosphorylation of arginine residues in proteins. This chain is Protein-arginine kinase, found in Clostridium kluyveri (strain NBRC 12016).